A 267-amino-acid polypeptide reads, in one-letter code: Interleukin-2 receptor subunit alpha (267 aa).

An N-terminal signal peptide occupies residues 1 to 21 (MEPHLLMLGFLSFTIVPGCWA). Positions 22–79 (ELCLYDPPEVPNATFKALSYKNGTILNCECKRGFRRLNELVYMACLGNSWSNNCQCTS) constitute a Sushi 1 domain. Residues 22-235 (ELCLYDPPEV…ETFVFTKEYQ (214 aa)) lie on the Extracellular side of the membrane. 3 cysteine pairs are disulfide-bonded: Cys-24/Cys-66, Cys-49/Cys-75, and Cys-51/Cys-77. N-linked (GlcNAc...) asparagine glycosylation is found at Asn-33 and Asn-43. Polar residues predominate over residues 82-93 (HDNSREQVTPQP). Residues 82 to 108 (HDNSREQVTPQPEGQKEQQTTDTQKST) form a disordered region. A compositionally biased stretch (low complexity) spans 98 to 108 (EQQTTDTQKST). The Sushi 2 domain maps to 118-181 (GHCREPPPWR…WTHPQLTCVD (64 aa)). Disulfide bonds link Cys-120–Cys-163 and Cys-147–Cys-179. Positions 191–215 (SEESQGSRNSFPESEASCPTPNTDF) are disordered. Positions 192–215 (EESQGSRNSFPESEASCPTPNTDF) are enriched in polar residues. Residues 236–256 (VAVASCIFLLLSILLLSGFTW) form a helical membrane-spanning segment. Residues 257–267 (QHRWRKSRRTI) are Cytoplasmic-facing.

As to quaternary structure, non-covalent dimer of an alpha and a beta subunit. IL2R exists in 3 different forms: a high affinity dimer, an intermediate affinity monomer (beta subunit), and a low affinity monomer (alpha subunit). The high and intermediate affinity forms also associate with a gamma subunit.

Its subcellular location is the membrane. Its function is as follows. Receptor for interleukin-2. The receptor is involved in the regulation of immune tolerance by controlling regulatory T cells (TREGs) activity. TREGs suppress the activation and expansion of autoreactive T-cells. The polypeptide is Interleukin-2 receptor subunit alpha (Il2ra) (Rattus norvegicus (Rat)).